The primary structure comprises 314 residues: Homoserine kinase (314 aa).

95–105 (PHSRGLGSSAA) is a binding site for ATP.

It belongs to the GHMP kinase family. Homoserine kinase subfamily.

The protein resides in the cytoplasm. It carries out the reaction L-homoserine + ATP = O-phospho-L-homoserine + ADP + H(+). It functions in the pathway amino-acid biosynthesis; L-threonine biosynthesis; L-threonine from L-aspartate: step 4/5. Its function is as follows. Catalyzes the ATP-dependent phosphorylation of L-homoserine to L-homoserine phosphate. The chain is Homoserine kinase from Mycobacterium sp. (strain JLS).